A 931-amino-acid chain; its full sequence is Bifunctional uridylyltransferase/uridylyl-removing enzyme (931 aa).

Residues 1-383 (MDSVTPNSRP…KTGNSWRRVP (383 aa)) are uridylyltransferase. Positions 384–739 (ESDDFIVDNN…VGFDPARGVT (356 aa)) are uridylyl-removing. Residues 499–622 (VDEHLIRCIG…VQSVEQMKLL (124 aa)) form the HD domain. ACT domains lie at 740 to 822 (ELTI…AVAR) and 851 to 931 (VIEV…QPAA).

The protein belongs to the GlnD family. The cofactor is Mg(2+).

It carries out the reaction [protein-PII]-L-tyrosine + UTP = [protein-PII]-uridylyl-L-tyrosine + diphosphate. It catalyses the reaction [protein-PII]-uridylyl-L-tyrosine + H2O = [protein-PII]-L-tyrosine + UMP + H(+). Uridylyltransferase (UTase) activity is inhibited by glutamine, while glutamine activates uridylyl-removing (UR) activity. Functionally, modifies, by uridylylation and deuridylylation, the PII regulatory proteins (GlnB and homologs), in response to the nitrogen status of the cell that GlnD senses through the glutamine level. Under low glutamine levels, catalyzes the conversion of the PII proteins and UTP to PII-UMP and PPi, while under higher glutamine levels, GlnD hydrolyzes PII-UMP to PII and UMP (deuridylylation). Thus, controls uridylylation state and activity of the PII proteins, and plays an important role in the regulation of nitrogen fixation and metabolism. This is Bifunctional uridylyltransferase/uridylyl-removing enzyme from Bradyrhizobium sp. (strain BTAi1 / ATCC BAA-1182).